We begin with the raw amino-acid sequence, 203 residues long: Holliday junction branch migration complex subunit RuvA (203 aa).

Positions 1–64 are domain I; sequence MIGRLRGYIL…EDAQLLYGFN (64 aa). A domain II region spans residues 65 to 142; the sequence is DKQERALFRE…KGLNGDLFNN (78 aa). The flexible linker stretch occupies residues 143 to 154; the sequence is SSEITLPTAAQA. A domain III region spans residues 155-203; sequence AELDAEAEAASALVALGYKPQEASRMVSKIAKPGADCETLIRDALRAAL.

This sequence belongs to the RuvA family. Homotetramer. Forms an RuvA(8)-RuvB(12)-Holliday junction (HJ) complex. HJ DNA is sandwiched between 2 RuvA tetramers; dsDNA enters through RuvA and exits via RuvB. An RuvB hexamer assembles on each DNA strand where it exits the tetramer. Each RuvB hexamer is contacted by two RuvA subunits (via domain III) on 2 adjacent RuvB subunits; this complex drives branch migration. In the full resolvosome a probable DNA-RuvA(4)-RuvB(12)-RuvC(2) complex forms which resolves the HJ.

The protein resides in the cytoplasm. In terms of biological role, the RuvA-RuvB-RuvC complex processes Holliday junction (HJ) DNA during genetic recombination and DNA repair, while the RuvA-RuvB complex plays an important role in the rescue of blocked DNA replication forks via replication fork reversal (RFR). RuvA specifically binds to HJ cruciform DNA, conferring on it an open structure. The RuvB hexamer acts as an ATP-dependent pump, pulling dsDNA into and through the RuvAB complex. HJ branch migration allows RuvC to scan DNA until it finds its consensus sequence, where it cleaves and resolves the cruciform DNA. The polypeptide is Holliday junction branch migration complex subunit RuvA (Serratia proteamaculans (strain 568)).